Reading from the N-terminus, the 156-residue chain is Protein-export protein SecB (156 aa).

Belongs to the SecB family. As to quaternary structure, homotetramer, a dimer of dimers. One homotetramer interacts with 1 SecA dimer.

It is found in the cytoplasm. In terms of biological role, one of the proteins required for the normal export of preproteins out of the cell cytoplasm. It is a molecular chaperone that binds to a subset of precursor proteins, maintaining them in a translocation-competent state. It also specifically binds to its receptor SecA. This chain is Protein-export protein SecB, found in Paraburkholderia xenovorans (strain LB400).